The following is a 1367-amino-acid chain: Phospholipid-transporting ATPase C4F10.16c (1367 aa).

The Cytoplasmic portion of the chain corresponds to 1 to 154; that stretch reads MPSLINFDAI…PKNLWNQFKN (154 aa). The interval 34–104 is disordered; that stretch reads HNGSLAHEGP…KKNEAGTESG (71 aa). Residues 50–70 show a composition bias toward basic and acidic residues; it reads SSRHHESQFSQEAHAEQRSRD. The span at 77–92 shows a compositional bias: polar residues; sequence FEGSCNNSDQSWTSRV. A helical membrane pass occupies residues 155-172; sequence IANAFFLFVTLLQCIPLF. At 173-177 the chain is on the lumenal side; sequence CPEHL. A helical transmembrane segment spans residues 178 to 197; that stretch reads GLSFIPLSVILLTTAIKDGI. Topologically, residues 198-482 are cytoplasmic; the sequence is EDYRRCVLDK…PSKRSRITRD (285 aa). A helical membrane pass occupies residues 483–503; that stretch reads LNWTIILNFLLLFAMCLFSGV. The Lumenal segment spans residues 504–531; it reads LRSIYSAQNNSARVFELSKNSNTAPAHG. Residues 532-552 form a helical membrane-spanning segment; that stretch reads IISIFTSLILFQNLVPISLYI. The Cytoplasmic portion of the chain corresponds to 553–1091; sequence TMDIVRSIQS…GRWDYKRMSQ (539 aa). The 4-aspartylphosphate intermediate role is filled by D600. ATP contacts are provided by D600, K601, T602, E724, F765, S767, K770, K788, R822, T823, T902, G903, D904, R1009, and K1015. D600 is a binding site for Mg(2+). Residue T602 coordinates Mg(2+). D1035 is a Mg(2+) binding site. Positions 1038 and 1039 each coordinate ATP. Mg(2+) is bound at residue D1039. Residues 1092 to 1112 traverse the membrane as a helical segment; sequence MISFFFYKNVIWTFILFWYQF. Over 1113 to 1124 the chain is Lumenal; the sequence is YNEFDGNYIFDY. A helical transmembrane segment spans residues 1125 to 1145; sequence TYVMLFNLLFTSLPVIIAGCF. The Cytoplasmic portion of the chain corresponds to 1146 to 1174; the sequence is DQDVDASVSMKNPSLYQRGILGLEWNGKR. A helical membrane pass occupies residues 1175-1197; that stretch reads FWSYMLDGIYQSLVCFGVALFVF. Topologically, residues 1198 to 1212 are lumenal; it reads KFGDFVSWTGRNIEC. A helical membrane pass occupies residues 1213–1233; the sequence is IEDIGLFISSPTIFVINIFIL. Residues 1234–1240 are Cytoplasmic-facing; that stretch reads MNQERLN. The helical transmembrane segment at 1241 to 1261 threads the bilayer; that stretch reads LISLITWMFSIGVFWIWTFIY. Topologically, residues 1262 to 1276 are lumenal; the sequence is SEVGPSYAFHKSASR. A helical transmembrane segment spans residues 1277 to 1297; the sequence is TCQTFGFWCVTVLTIALCLLP. Residue R1298 coordinates a 1,2-diacyl-sn-glycero-3-phospho-L-serine. Residues 1298 to 1367 lie on the Cytoplasmic side of the membrane; that stretch reads RFSYICLQKL…TSVSFDDSNK (70 aa).

Belongs to the cation transport ATPase (P-type) (TC 3.A.3) family. Type IV subfamily. It depends on Mg(2+) as a cofactor.

The protein localises to the cell membrane. It localises to the endoplasmic reticulum membrane. It catalyses the reaction ATP + H2O + phospholipidSide 1 = ADP + phosphate + phospholipidSide 2.. The catalysed reaction is a 1,2-diacyl-sn-glycero-3-phosphoethanolamine(out) + ATP + H2O = a 1,2-diacyl-sn-glycero-3-phosphoethanolamine(in) + ADP + phosphate + H(+). It carries out the reaction a 1,2-diacyl-sn-glycero-3-phosphocholine(out) + ATP + H2O = a 1,2-diacyl-sn-glycero-3-phosphocholine(in) + ADP + phosphate + H(+). The enzyme catalyses a beta-D-glucosyl-(1&lt;-&gt;1')-N-acylsphing-4-enine(out) + ATP + H2O = a beta-D-glucosyl-(1&lt;-&gt;1')-N-acylsphing-4-enine(in) + ADP + phosphate + H(+). It catalyses the reaction a 1,2-diacyl-sn-glycero-3-phospho-L-serine(out) + ATP + H2O = a 1,2-diacyl-sn-glycero-3-phospho-L-serine(in) + ADP + phosphate + H(+). Catalytic component of a P4-ATPase flippase complex which catalyzes the hydrolysis of ATP coupled to the transport of glucosylceramide, phosphatidylcholine, phosphatidylethanolamine, and small amounts of phosphatidylserine from the lumenal to the cytosolic leaflet of the cell membrane and ensures the maintenance of asymmetric distribution of phospholipids. The sequence is that of Phospholipid-transporting ATPase C4F10.16c from Schizosaccharomyces pombe (strain 972 / ATCC 24843) (Fission yeast).